The primary structure comprises 397 residues: MKKIIRLASKGDGVTEDGQFVPNSVPDDYISDDGKLEFGAHHIEPVCRHFSVCGGCRLQYADEEVYKNFLTDRIAEAFHQQALSAPVLKTAHLSPPYSRRRVALRAFKAGKKLTLGYNKTSSHQLVDIVECPLLDKNLFKAAMDLRSFLQKWLAPRSLAQIEMTLADQGIDCLLVMPFPETLEATEAITAFAAEKGFARLSIDQGYGVETRWESERVTVTLGAVPVTLPAHAFLQATKDGEQTLVHMVKEAVGDAHFVADLFSGLGTFALSFEKDKRVYAAEGMRDAVLALKQAAALAGKAVFVEHRDLFRRPLQKDELVRFECIILDPPRAGAKEQIANLAILPNGRIVYVSCNPATFARDAKTLLEAGWVLHWVKPVGQFPWSLHVEMVGLFTKM.

[4Fe-4S] cluster-binding residues include Cys-47, Cys-53, Cys-56, and Cys-131. S-adenosyl-L-methionine-binding residues include Gln-235, Phe-262, Glu-282, and Asp-328. Cys-354 (nucleophile) is an active-site residue.

It belongs to the class I-like SAM-binding methyltransferase superfamily. RNA M5U methyltransferase family.

This is an uncharacterized protein from Zymomonas mobilis subsp. mobilis (strain ATCC 31821 / ZM4 / CP4).